Here is a 331-residue protein sequence, read N- to C-terminus: Ketol-acid reductoisomerase (NADP(+)) (331 aa).

One can recognise a KARI N-terminal Rossmann domain in the interval Met-1 to Thr-182. NADP(+)-binding positions include Tyr-25 to Gln-28, Ser-51, Ser-53, and Asp-83 to Gln-86. The active site involves His-108. NADP(+) is bound at residue Gly-134. The KARI C-terminal knotted domain maps to Asn-183 to Leu-328. Asp-191, Glu-195, Glu-227, and Glu-231 together coordinate Mg(2+). Ser-252 is a binding site for substrate.

Belongs to the ketol-acid reductoisomerase family. It depends on Mg(2+) as a cofactor.

It catalyses the reaction (2R)-2,3-dihydroxy-3-methylbutanoate + NADP(+) = (2S)-2-acetolactate + NADPH + H(+). The enzyme catalyses (2R,3R)-2,3-dihydroxy-3-methylpentanoate + NADP(+) = (S)-2-ethyl-2-hydroxy-3-oxobutanoate + NADPH + H(+). The protein operates within amino-acid biosynthesis; L-isoleucine biosynthesis; L-isoleucine from 2-oxobutanoate: step 2/4. Its pathway is amino-acid biosynthesis; L-valine biosynthesis; L-valine from pyruvate: step 2/4. Its function is as follows. Involved in the biosynthesis of branched-chain amino acids (BCAA). Catalyzes an alkyl-migration followed by a ketol-acid reduction of (S)-2-acetolactate (S2AL) to yield (R)-2,3-dihydroxy-isovalerate. In the isomerase reaction, S2AL is rearranged via a Mg-dependent methyl migration to produce 3-hydroxy-3-methyl-2-ketobutyrate (HMKB). In the reductase reaction, this 2-ketoacid undergoes a metal-dependent reduction by NADPH to yield (R)-2,3-dihydroxy-isovalerate. This chain is Ketol-acid reductoisomerase (NADP(+)), found in Synechococcus sp. (strain RCC307).